A 130-amino-acid polypeptide reads, in one-letter code: Small ribosomal subunit protein uS9 (130 aa).

Positions 98-130 are disordered; it reads LKRAGLLTRDPRMKERKKPGLKKARRSPQFSKR. Residues 111–130 show a composition bias toward basic residues; that stretch reads KERKKPGLKKARRSPQFSKR.

Belongs to the universal ribosomal protein uS9 family.

The polypeptide is Small ribosomal subunit protein uS9 (Staphylococcus epidermidis (strain ATCC 35984 / DSM 28319 / BCRC 17069 / CCUG 31568 / BM 3577 / RP62A)).